The following is a 331-amino-acid chain: Putative peptidyl-prolyl cis-trans isomerase RF_0616 (331 aa).

A disordered region spans residues 28 to 50; sequence NPTTIEQTASNNSSTDENQTSIN. The PPIase FKBP-type domain maps to 128-226; that stretch reads GHVVTVFYQI…NNEVKIYDDE (99 aa).

It catalyses the reaction [protein]-peptidylproline (omega=180) = [protein]-peptidylproline (omega=0). This is Putative peptidyl-prolyl cis-trans isomerase RF_0616 from Rickettsia felis (strain ATCC VR-1525 / URRWXCal2) (Rickettsia azadi).